The sequence spans 591 residues: Formate--tetrahydrofolate ligase (591 aa).

74-81 (TPLGEGKS) is a binding site for ATP.

It belongs to the formate--tetrahydrofolate ligase family.

It catalyses the reaction (6S)-5,6,7,8-tetrahydrofolate + formate + ATP = (6R)-10-formyltetrahydrofolate + ADP + phosphate. Its pathway is one-carbon metabolism; tetrahydrofolate interconversion. The protein is Formate--tetrahydrofolate ligase of Lawsonia intracellularis (strain PHE/MN1-00).